Reading from the N-terminus, the 556-residue chain is Formate--tetrahydrofolate ligase (556 aa).

65 to 72 lines the ATP pocket; it reads TPAGEGKS.

The protein belongs to the formate--tetrahydrofolate ligase family.

The catalysed reaction is (6S)-5,6,7,8-tetrahydrofolate + formate + ATP = (6R)-10-formyltetrahydrofolate + ADP + phosphate. The protein operates within one-carbon metabolism; tetrahydrofolate interconversion. This Streptococcus equi subsp. equi (strain 4047) protein is Formate--tetrahydrofolate ligase.